Reading from the N-terminus, the 496-residue chain is Beta-N-acetylhexosaminidase (496 aa).

The active-site Proton donor is the E298.

It belongs to the glycosyl hydrolase 20 family.

It carries out the reaction Hydrolysis of terminal non-reducing N-acetyl-D-hexosamine residues in N-acetyl-beta-D-hexosaminides.. The protein operates within glycan degradation; chitin degradation. In terms of biological role, catalyzes the cleavage of beta-N-acetylglucosaminides and beta-N-acetylgalactosaminides. Also catalyzes the hydrolysis of N-acetylchitooligomers. May be involved in chitin degradation. It is not able to cleave beta-glucosides. The polypeptide is Beta-N-acetylhexosaminidase (hex20) (Cellulomonas fimi).